We begin with the raw amino-acid sequence, 199 residues long: Charged multivesicular body protein 1B2 (199 aa).

Positions 15–47 (AKELNRNAKKCDKEEKAEKAKIKKAIQKGNTEV) form a coiled coil. An interaction with IST1 region spans residues 132-156 (MEDTMSSTTTLTTPQNQVDMLLQEM). The tract at residues 167–199 (ELPQGQTGSVGASVASTEQDELSQRLARLRDQV) is disordered. Residues 170 to 183 (QGQTGSVGASVAST) show a composition bias toward polar residues. The interaction with SPAST stretch occupies residues 174-199 (GSVGASVASTEQDELSQRLARLRDQV). The stretch at 177-199 (GASVASTEQDELSQRLARLRDQV) forms a coiled coil. The interval 180-196 (VASTEQDELSQRLARLR) is interaction with VPS4A, MITD1 and STAMBP. The segment at 180–199 (VASTEQDELSQRLARLRDQV) is interaction with VTA1. The segment at 183 to 199 (TEQDELSQRLARLRDQV) is interaction with VPS4B. Positions 186-196 (DELSQRLARLR) match the MIT-interacting motif motif.

It belongs to the SNF7 family. As to quaternary structure, probable peripherally associated component of the endosomal sorting required for transport complex III (ESCRT-III). ESCRT-III components are thought to multimerize to form a flat lattice on the perimeter membrane of the endosome. Several assembly forms of ESCRT-III may exist that interact and act sequentially. Interacts with CHMP1A. Interacts with VTA1; the interaction probably involves the open conformation of CHMP1B. Interacts with CHMP2A. Interacts with VPS4A; the interaction is direct. Interacts with VPS4B; the interaction is direct. Interacts with SPAST (via MIT domain); the interaction is direct. Interacts with IST1. Interacts with MITD1. Interacts with STAMBP.

The protein resides in the cytoplasm. The protein localises to the cytosol. Its subcellular location is the endosome. It localises to the late endosome membrane. Its function is as follows. Probable peripherally associated component of the endosomal sorting required for transport complex III (ESCRT-III) which is involved in multivesicular bodies (MVBs) formation and sorting of endosomal cargo proteins into MVBs. MVBs contain intraluminal vesicles (ILVs) that are generated by invagination and scission from the limiting membrane of the endosome and mostly are delivered to lysosomes enabling degradation of membrane proteins, such as stimulated growth factor receptors, lysosomal enzymes and lipids. The MVB pathway appears to require the sequential function of ESCRT-O, -I,-II and -III complexes. ESCRT-III proteins mostly dissociate from the invaginating membrane before the ILV is released. The ESCRT machinery also functions in topologically equivalent membrane fission events, such as the terminal stages of cytokinesis. ESCRT-III proteins are believed to mediate the necessary vesicle extrusion and/or membrane fission activities, possibly in conjunction with the AAA ATPase VPS4. Involved in cytokinesis. Involved in recruiting VPS4A and/or VPS4B and SPAST to the midbody of dividing cells. This chain is Charged multivesicular body protein 1B2, found in Mus musculus (Mouse).